A 237-amino-acid chain; its full sequence is Chalcone--flavanone isomerase (237 aa).

Positions 50 and 192 each coordinate substrate.

It belongs to the chalcone isomerase family.

It catalyses the reaction a chalcone = a flavanone.. It functions in the pathway secondary metabolite biosynthesis; flavonoid biosynthesis. Functionally, catalyzes the intramolecular cyclization of bicyclic chalcones into tricyclic (S)-flavanones. Responsible for the isomerization of 4,2',4',6'-tetrahydroxychalcone (also termed chalcone) into naringenin. This Callistephus chinensis (China aster) protein is Chalcone--flavanone isomerase (CHI).